A 504-amino-acid chain; its full sequence is CaM kinase-like vesicle-associated protein (504 aa).

The Protein kinase domain maps to 24–286; that stretch reads YDLGQVVKTE…AEEAISHEWI (263 aa). Positions 378-504 are disordered; that stretch reads KSDDMASADR…AQESQRVETS (127 aa). At S384 the chain carries Phosphoserine. Positions 390–431 are enriched in polar residues; the sequence is TPATDGSATPATDGSVTPATDGSITPATDGSVTPATDRSATP. T438 and T462 each carry phosphothreonine. Residues 445–470 are compositionally biased toward low complexity; that stretch reads TVPAAQSSAAPAAKAAATPEPAVAQP.

The protein belongs to the protein kinase superfamily. CAMK Ser/Thr protein kinase family. As to quaternary structure, interacts with calmodulin, in the presence of calcium. Ca(2+) is required as a cofactor. As to expression, expressed in brain and weakly in eye. Not detected in liver, kidney, spleen, thymus, bladder, aorta, lung, intestine, esophagus, stomach, skeletal muscle, heart, diaphragm, uterus, tail skin, submaxillary gland, prostate, ear, epididymis, placenta, pancreas, ovary, testis, adrenal gland, parathyroid gland, thyroid gland, pineal gland, pituitary and sciatic nerve. In adult hippocampus, predominantly expressed in caudate nucleus, cortex, hypothalamus, olfactory bulb, and midbrain and faintly in pons, brainstem and spinal cord.

The protein localises to the cell membrane. The protein resides in the cytoplasmic vesicle membrane. In terms of biological role, has no detectable kinase activity in vitro. This is CaM kinase-like vesicle-associated protein (Camkv) from Rattus norvegicus (Rat).